Reading from the N-terminus, the 328-residue chain is dITP/XTP pyrophosphatase (328 aa).

The interval 1 to 129 is unknown; the sequence is MSEKIYEYKD…ATSEQGFGDI (129 aa). Residues 130-324 form an NTP pyrophosphatase region; sequence ILIATRNEGK…KLMEVFPAWQ (195 aa). 134-139 is a substrate binding site; sequence TRNEGK. The active-site Proton acceptor is Asp-196. Asp-196 lines the Mg(2+) pocket. Substrate is bound by residues Ser-197, 280-283, Lys-303, and 308-309; these read FGYD and HR.

Belongs to the HAM1 NTPase family. As to quaternary structure, homodimer. Mg(2+) is required as a cofactor.

The enzyme catalyses XTP + H2O = XMP + diphosphate + H(+). The catalysed reaction is dITP + H2O = dIMP + diphosphate + H(+). It catalyses the reaction ITP + H2O = IMP + diphosphate + H(+). Pyrophosphatase that catalyzes the hydrolysis of nucleoside triphosphates to their monophosphate derivatives, with a high preference for the non-canonical purine nucleotides XTP (xanthosine triphosphate), dITP (deoxyinosine triphosphate) and ITP. Seems to function as a house-cleaning enzyme that removes non-canonical purine nucleotides from the nucleotide pool, thus preventing their incorporation into DNA/RNA and avoiding chromosomal lesions. This chain is dITP/XTP pyrophosphatase, found in Streptococcus pyogenes serotype M3 (strain ATCC BAA-595 / MGAS315).